Consider the following 342-residue polypeptide: Succinylglutamate desuccinylase (342 aa).

Residues histidine 63, glutamate 66, and histidine 155 each coordinate Zn(2+). Glutamate 219 is an active-site residue.

This sequence belongs to the AspA/AstE family. Succinylglutamate desuccinylase subfamily. Zn(2+) is required as a cofactor.

The catalysed reaction is N-succinyl-L-glutamate + H2O = L-glutamate + succinate. Its pathway is amino-acid degradation; L-arginine degradation via AST pathway; L-glutamate and succinate from L-arginine: step 5/5. Transforms N(2)-succinylglutamate into succinate and glutamate. In Vibrio cholerae serotype O1 (strain ATCC 39315 / El Tor Inaba N16961), this protein is Succinylglutamate desuccinylase.